Reading from the N-terminus, the 776-residue chain is Ion-translocating oxidoreductase complex subunit C (776 aa).

4Fe-4S ferredoxin-type domains follow at residues 368–397 (MGAP…QQLY) and 407–436 (KATA…VQYF). 8 residues coordinate [4Fe-4S] cluster: Cys-377, Cys-380, Cys-383, Cys-387, Cys-416, Cys-419, Cys-422, and Cys-426. Basic and acidic residues-rich tracts occupy residues 534–543 (ARARQAEKVQ), 597–611 (ADEK…RKAA), 633–647 (ADEK…RKAA), 669–683 (ADEK…RKAA), and 705–719 (ADEK…RKAT). The tract at residues 534–754 (ARARQAEKVQ…ENEAEDPRKA (221 aa)) is disordered. Over residues 721 to 743 (EAAIARAKARKAAQAGERAQAAN) the composition is skewed to low complexity.

Belongs to the 4Fe4S bacterial-type ferredoxin family. RnfC subfamily. In terms of assembly, the complex is composed of six subunits: RnfA, RnfB, RnfC, RnfD, RnfE and RnfG. The cofactor is [4Fe-4S] cluster.

It localises to the cell inner membrane. In terms of biological role, part of a membrane-bound complex that couples electron transfer with translocation of ions across the membrane. This is Ion-translocating oxidoreductase complex subunit C from Cronobacter sakazakii (strain ATCC BAA-894) (Enterobacter sakazakii).